The sequence spans 110 residues: MLSLAKIAALFVLTAVAEIVGCYLPWLVLKAGKPVWLLAPAALSLALFAWLLTLHPAAAARTYAAYGGVYIAVALAWLRIVDGVPLSRWDAAGAALALAGMSVIALQPRG.

4 helical membrane passes run 9 to 29 (ALFVLTAVAEIVGCYLPWLVL), 34 to 54 (PVWLLAPAALSLALFAWLLTL), 64 to 84 (AAYGGVYIAVALAWLRIVDGV), and 86 to 106 (LSRWDAAGAALALAGMSVIAL).

It belongs to the UPF0060 family.

Its subcellular location is the cell inner membrane. The chain is UPF0060 membrane protein BTH_I2792 from Burkholderia thailandensis (strain ATCC 700388 / DSM 13276 / CCUG 48851 / CIP 106301 / E264).